The sequence spans 260 residues: tRNA pseudouridine synthase A (260 aa).

Catalysis depends on Asp-52, which acts as the Nucleophile. Position 110 (Tyr-110) interacts with substrate.

The protein belongs to the tRNA pseudouridine synthase TruA family. Homodimer.

The enzyme catalyses uridine(38/39/40) in tRNA = pseudouridine(38/39/40) in tRNA. In terms of biological role, formation of pseudouridine at positions 38, 39 and 40 in the anticodon stem and loop of transfer RNAs. In Thiobacillus denitrificans (strain ATCC 25259 / T1), this protein is tRNA pseudouridine synthase A.